Here is a 183-residue protein sequence, read N- to C-terminus: 3-hydroxydecanoyl-[acyl-carrier-protein] dehydratase (183 aa).

Residue H77 is part of the active site.

Belongs to the thioester dehydratase family. FabA subfamily. Homodimer.

The protein resides in the cytoplasm. The enzyme catalyses a (3R)-hydroxyacyl-[ACP] = a (2E)-enoyl-[ACP] + H2O. It catalyses the reaction (3R)-hydroxydecanoyl-[ACP] = (2E)-decenoyl-[ACP] + H2O. The catalysed reaction is (2E)-decenoyl-[ACP] = (3Z)-decenoyl-[ACP]. The protein operates within lipid metabolism; fatty acid biosynthesis. In terms of biological role, necessary for the introduction of cis unsaturation into fatty acids. Catalyzes the dehydration of (3R)-3-hydroxydecanoyl-ACP to E-(2)-decenoyl-ACP and then its isomerization to Z-(3)-decenoyl-ACP. Can catalyze the dehydratase reaction for beta-hydroxyacyl-ACPs with saturated chain lengths up to 16:0, being most active on intermediate chain length. This chain is 3-hydroxydecanoyl-[acyl-carrier-protein] dehydratase, found in Hahella chejuensis (strain KCTC 2396).